The primary structure comprises 67 residues: Large ribosomal subunit protein bL35 (67 aa).

The tract at residues 22 to 45 (GKIKRWKSGGAHYNTKKSSKRKRH) is disordered. Residues 35–45 (NTKKSSKRKRH) are compositionally biased toward basic residues.

The protein belongs to the bacterial ribosomal protein bL35 family.

In Aquifex aeolicus (strain VF5), this protein is Large ribosomal subunit protein bL35.